A 287-amino-acid polypeptide reads, in one-letter code: 4-hydroxybenzoate octaprenyltransferase (287 aa).

The next 8 helical transmembrane spans lie at 19–39 (PIGSLLLLWPTLWALWLAADG), 43–63 (LHVLVIFTIGTVLMRSAGCVI), 94–116 (LALAAGLSALSFVLILPLDPLVI), 135–155 (FFAIPQAYLGIAFGFGIPMGF), 160–180 (GEVPPIAWVMLLANIFWAVAY), 207–227 (FDVAAVMLCYAVALGLLGWVG), 234–254 (ALYFAGLAVAAGMALYHYTLI), and 269–286 (NNWLGAAVFAGLALDYLI).

This sequence belongs to the UbiA prenyltransferase family. It depends on Mg(2+) as a cofactor.

The protein resides in the cell inner membrane. The enzyme catalyses all-trans-octaprenyl diphosphate + 4-hydroxybenzoate = 4-hydroxy-3-(all-trans-octaprenyl)benzoate + diphosphate. Its pathway is cofactor biosynthesis; ubiquinone biosynthesis. Its function is as follows. Catalyzes the prenylation of para-hydroxybenzoate (PHB) with an all-trans polyprenyl group. Mediates the second step in the final reaction sequence of ubiquinone-8 (UQ-8) biosynthesis, which is the condensation of the polyisoprenoid side chain with PHB, generating the first membrane-bound Q intermediate 3-octaprenyl-4-hydroxybenzoate. The sequence is that of 4-hydroxybenzoate octaprenyltransferase from Azoarcus sp. (strain BH72).